Here is a 324-residue protein sequence, read N- to C-terminus: D-alanine--D-alanine ligase (324 aa).

The ATP-grasp domain occupies 121 to 321 (NQYLKAFGVR…IKDVMTDIIE (201 aa)). 149-204 (VEKIGLPCFIKPNLGGSSFGVTKVKTREQIQPAIAKAFSEAEEVMIEAFMGGTELT) serves as a coordination point for ATP. Residues D275, E288, and N290 each coordinate Mg(2+).

The protein belongs to the D-alanine--D-alanine ligase family. Mg(2+) is required as a cofactor. Requires Mn(2+) as cofactor.

Its subcellular location is the cytoplasm. It carries out the reaction 2 D-alanine + ATP = D-alanyl-D-alanine + ADP + phosphate + H(+). It participates in cell wall biogenesis; peptidoglycan biosynthesis. Functionally, cell wall formation. In Bacteroides fragilis (strain YCH46), this protein is D-alanine--D-alanine ligase.